Reading from the N-terminus, the 352-residue chain is Nicotinate-nucleotide--dimethylbenzimidazole phosphoribosyltransferase (352 aa).

Residue glutamate 318 is the Proton acceptor of the active site.

It belongs to the CobT family.

The enzyme catalyses 5,6-dimethylbenzimidazole + nicotinate beta-D-ribonucleotide = alpha-ribazole 5'-phosphate + nicotinate + H(+). Its pathway is nucleoside biosynthesis; alpha-ribazole biosynthesis; alpha-ribazole from 5,6-dimethylbenzimidazole: step 1/2. In terms of biological role, catalyzes the synthesis of alpha-ribazole-5'-phosphate from nicotinate mononucleotide (NAMN) and 5,6-dimethylbenzimidazole (DMB). The chain is Nicotinate-nucleotide--dimethylbenzimidazole phosphoribosyltransferase from Azotobacter vinelandii (strain DJ / ATCC BAA-1303).